Here is a 2586-residue protein sequence, read N- to C-terminus: Vitellogenin (2586 aa).

Positions 1–18 (MTTSTLLFVLAFVAGGLA) are cleaved as a signal peptide. One can recognise a Vitellogenin domain in the interval 42-653 (YQPDKTYAYA…APGSFVPRAV (612 aa)). Disulfide bonds link cysteine 170–cysteine 194 and cysteine 2378–cysteine 2515. The VWFD domain occupies 2353-2516 (RTATVVGGSE…AAWQEDRQCS (164 aa)).

Glycosylated. In terms of processing, may be modified covalently by lipidation. Expressed in the ovary and hepatopancrease of vitellogenic females. Not expressed in the muscle, heart and intestine of female or in the hepatopancrease of the male. Detected in the ovary and hemolymph of female (at protein level). Not detected in the female hepatopancreas or in the male hemolymph and testis (at protein level).

In terms of biological role, precursor of the egg-yolk proteins that are sources of nutrients during embryonic development. In Penaeus merguiensis (Banana prawn), this protein is Vitellogenin.